Consider the following 1606-residue polypeptide: Phosphatidylinositol 3,4,5-trisphosphate-dependent Rac exchanger 2 protein (1606 aa).

Residues 23 to 214 (LRVCVLSELQ…KAVCSNINEA (192 aa)) form the DH domain. Residues 245–361 (EMLMCGVLLK…WFEAILKERE (117 aa)) form the PH domain. 2 consecutive DEP domains span residues 390–464 (CRQG…RFRY) and 491–566 (SLFT…FFSD). 2 consecutive PDZ domains span residues 592 to 671 (KSLL…VLVS) and 677 to 754 (TVKI…QDSI). The segment at 1581–1606 (GVRDRTPQSAPRLYKLCEPPPPAGEE) is disordered.

In terms of assembly, interacts with RAC1. As to expression, isoform 1 is highly expressed in skeletal muscle, heart and placenta, absent from peripheral blood leukocytes. Isoform 2 is expressed in skeletal muscle, kidney, small intestine, and placenta. Isoform 3 is expressed in the heart.

Functions as a RAC1 guanine nucleotide exchange factor (GEF), activating Rac proteins by exchanging bound GDP for free GTP. Its activity is synergistically activated by phosphatidylinositol 3,4,5-trisphosphate and the beta gamma subunits of heterotrimeric G protein. Mediates the activation of RAC1 in a PI3K-dependent manner. May be an important mediator of Rac signaling, acting directly downstream of both G protein-coupled receptors and phosphoinositide 3-kinase. The sequence is that of Phosphatidylinositol 3,4,5-trisphosphate-dependent Rac exchanger 2 protein from Homo sapiens (Human).